We begin with the raw amino-acid sequence, 119 residues long: Holo-[acyl-carrier-protein] synthase (119 aa).

2 residues coordinate Mg(2+): D8 and E58.

It belongs to the P-Pant transferase superfamily. AcpS family. It depends on Mg(2+) as a cofactor.

The protein localises to the cytoplasm. It catalyses the reaction apo-[ACP] + CoA = holo-[ACP] + adenosine 3',5'-bisphosphate + H(+). Transfers the 4'-phosphopantetheine moiety from coenzyme A to a Ser of acyl-carrier-protein. This is Holo-[acyl-carrier-protein] synthase from Bacillus cereus (strain ATCC 14579 / DSM 31 / CCUG 7414 / JCM 2152 / NBRC 15305 / NCIMB 9373 / NCTC 2599 / NRRL B-3711).